We begin with the raw amino-acid sequence, 368 residues long: MRVIFTGGGTGGHIYPIMAIIERLKERGISTNDKILFVGTKKGLESKIVPAAGVNFKTINIQGFNRKHPLKNFETIKLFLQATKSARKILKEFKPDVVLGTGGYVSGAMVYEAAKMHIPTMIHESNSVVGLANKFLGHYVDRICYTFDDAAKEFPEKKKLVKTGNPRSQQVLSLHEEKIDIKKKWGLNPDMPTVLVFGGSRGALAINRIMLKSLMNLKTKPYQIIWATGTYYFDSVQKKLKGVDIGTNIKVLPYIKNMPGLLPEMTCVVSRSGATSIAEFTALGVPVILIPSPNVTHNHQMKNALDLEKAGAALVIPEDDLNPNNFVSSIDHILLDEKYAKEMSQASKALGVPDASDQVIKVMEEISR.

UDP-N-acetyl-alpha-D-glucosamine contacts are provided by residues 10–12 (TGG), asparagine 126, serine 200, isoleucine 255, and glutamine 300.

It belongs to the glycosyltransferase 28 family. MurG subfamily.

It localises to the cell membrane. It carries out the reaction Mur2Ac(oyl-L-Ala-gamma-D-Glu-L-Lys-D-Ala-D-Ala)-di-trans,octa-cis-undecaprenyl diphosphate + UDP-N-acetyl-alpha-D-glucosamine = beta-D-GlcNAc-(1-&gt;4)-Mur2Ac(oyl-L-Ala-gamma-D-Glu-L-Lys-D-Ala-D-Ala)-di-trans,octa-cis-undecaprenyl diphosphate + UDP + H(+). It participates in cell wall biogenesis; peptidoglycan biosynthesis. Cell wall formation. Catalyzes the transfer of a GlcNAc subunit on undecaprenyl-pyrophosphoryl-MurNAc-pentapeptide (lipid intermediate I) to form undecaprenyl-pyrophosphoryl-MurNAc-(pentapeptide)GlcNAc (lipid intermediate II). This chain is UDP-N-acetylglucosamine--N-acetylmuramyl-(pentapeptide) pyrophosphoryl-undecaprenol N-acetylglucosamine transferase, found in Lactobacillus helveticus (strain DPC 4571).